Consider the following 264-residue polypeptide: Thymidylate synthase (264 aa).

Residue Arg21 participates in dUMP binding. His51 serves as a coordination point for (6R)-5,10-methylene-5,6,7,8-tetrahydrofolate. Residue 126 to 127 (RR) participates in dUMP binding. Catalysis depends on Cys146, which acts as the Nucleophile. DUMP is bound by residues 166–169 (RSAD), Asn177, and 207–209 (HLY). Asp169 lines the (6R)-5,10-methylene-5,6,7,8-tetrahydrofolate pocket. (6R)-5,10-methylene-5,6,7,8-tetrahydrofolate is bound at residue Ala263.

The protein belongs to the thymidylate synthase family. Bacterial-type ThyA subfamily. Homodimer.

Its subcellular location is the cytoplasm. It catalyses the reaction dUMP + (6R)-5,10-methylene-5,6,7,8-tetrahydrofolate = 7,8-dihydrofolate + dTMP. It participates in pyrimidine metabolism; dTTP biosynthesis. Catalyzes the reductive methylation of 2'-deoxyuridine-5'-monophosphate (dUMP) to 2'-deoxythymidine-5'-monophosphate (dTMP) while utilizing 5,10-methylenetetrahydrofolate (mTHF) as the methyl donor and reductant in the reaction, yielding dihydrofolate (DHF) as a by-product. This enzymatic reaction provides an intracellular de novo source of dTMP, an essential precursor for DNA biosynthesis. This is Thymidylate synthase from Bartonella tribocorum (strain CIP 105476 / IBS 506).